Reading from the N-terminus, the 90-residue chain is UPF0335 protein Smed_2680 (90 aa).

This sequence belongs to the UPF0335 family.

The chain is UPF0335 protein Smed_2680 from Sinorhizobium medicae (strain WSM419) (Ensifer medicae).